The chain runs to 854 residues: Protein ROOT HAIR DEFECTIVE 3 homolog 1 (854 aa).

The Cytoplasmic portion of the chain corresponds to Met1–Leu680. Residues Gly37–Arg252 enclose the GB1/RHD3-type G domain. Gly47 to Ser54 is a binding site for GTP. Positions Ala217–Ser242 form a coiled coil. A helical transmembrane segment spans residues Pro681–Leu701. At Arg702–Pro704 the chain is on the lumenal side. A helical transmembrane segment spans residues Ile705 to Asp725. Topologically, residues Ile726–Val854 are cytoplasmic. Low complexity-rich tracts occupy residues Thr758–Pro781 and Val814–Pro828. The tract at residues Thr758 to Val854 is disordered. Residues Gln842–Val854 show a composition bias toward polar residues.

Belongs to the TRAFAC class dynamin-like GTPase superfamily. GB1/RHD3 GTPase family. RHD3 subfamily.

It localises to the endoplasmic reticulum membrane. In terms of biological role, probable GTP-binding protein that may be involved in cell development. This is Protein ROOT HAIR DEFECTIVE 3 homolog 1 from Oryza sativa subsp. japonica (Rice).